Here is a 753-residue protein sequence, read N- to C-terminus: 5-methyltetrahydropteroyltriglutamate--homocysteine methyltransferase (753 aa).

5-methyltetrahydropteroyltri-L-glutamate is bound by residues R17 to K20 and K117. L-homocysteine contacts are provided by residues I431–S433 and E484. L-methionine contacts are provided by residues I431–S433 and E484. 5-methyltetrahydropteroyltri-L-glutamate-binding positions include R515–C516 and W561. D599 is an L-homocysteine binding site. D599 is an L-methionine binding site. E605 contacts 5-methyltetrahydropteroyltri-L-glutamate. Residues H641, C643, and E665 each coordinate Zn(2+). H694 (proton donor) is an active-site residue. C726 provides a ligand contact to Zn(2+).

This sequence belongs to the vitamin-B12 independent methionine synthase family. It depends on Zn(2+) as a cofactor.

It carries out the reaction 5-methyltetrahydropteroyltri-L-glutamate + L-homocysteine = tetrahydropteroyltri-L-glutamate + L-methionine. It participates in amino-acid biosynthesis; L-methionine biosynthesis via de novo pathway; L-methionine from L-homocysteine (MetE route): step 1/1. Catalyzes the transfer of a methyl group from 5-methyltetrahydrofolate to homocysteine resulting in methionine formation. The protein is 5-methyltetrahydropteroyltriglutamate--homocysteine methyltransferase of Escherichia coli O6:K15:H31 (strain 536 / UPEC).